A 482-amino-acid chain; its full sequence is Glycogen synthase 2 (482 aa).

Lys-18 is a binding site for ADP-alpha-D-glucose.

The protein belongs to the glycosyltransferase 1 family. Bacterial/plant glycogen synthase subfamily.

The catalysed reaction is [(1-&gt;4)-alpha-D-glucosyl](n) + ADP-alpha-D-glucose = [(1-&gt;4)-alpha-D-glucosyl](n+1) + ADP + H(+). The protein operates within glycan biosynthesis; glycogen biosynthesis. Its function is as follows. Synthesizes alpha-1,4-glucan chains using ADP-glucose. The protein is Glycogen synthase 2 of Bradyrhizobium diazoefficiens (strain JCM 10833 / BCRC 13528 / IAM 13628 / NBRC 14792 / USDA 110).